A 417-amino-acid polypeptide reads, in one-letter code: uncharacterized protein (417 aa).

Disordered stretches follow at residues 44 to 83 (FTNE…VRSR) and 325 to 346 (VQSA…PPKE). Over residues 54-64 (SNYSTSGYDSS) the composition is skewed to low complexity. Positions 65–76 (AETISANSSPIN) are enriched in polar residues. Residues 326-339 (QSARKNQKKGRKNR) show a composition bias toward basic residues. Residues 362-382 (FLIIGVYVLVFIYVCTNVLTV) form a helical membrane-spanning segment.

Its subcellular location is the membrane. This is an uncharacterized protein from Caenorhabditis elegans.